Consider the following 291-residue polypeptide: Ribose-phosphate pyrophosphokinase (291 aa).

ATP-binding positions include aspartate 34–glutamate 36 and arginine 92–glutamine 93. Histidine 125 and aspartate 165 together coordinate Mg(2+). Residue lysine 188 is part of the active site. Residues arginine 190 and aspartate 214 each contribute to the D-ribose 5-phosphate site.

This sequence belongs to the ribose-phosphate pyrophosphokinase family. Class III (archaeal) subfamily. It depends on Mg(2+) as a cofactor.

Its subcellular location is the cytoplasm. The enzyme catalyses D-ribose 5-phosphate + ATP = 5-phospho-alpha-D-ribose 1-diphosphate + AMP + H(+). It functions in the pathway metabolic intermediate biosynthesis; 5-phospho-alpha-D-ribose 1-diphosphate biosynthesis; 5-phospho-alpha-D-ribose 1-diphosphate from D-ribose 5-phosphate (route I): step 1/1. Involved in the biosynthesis of the central metabolite phospho-alpha-D-ribosyl-1-pyrophosphate (PRPP) via the transfer of pyrophosphoryl group from ATP to 1-hydroxyl of ribose-5-phosphate (Rib-5-P). The chain is Ribose-phosphate pyrophosphokinase from Methanopyrus kandleri (strain AV19 / DSM 6324 / JCM 9639 / NBRC 100938).